The following is a 601-amino-acid chain: Glutamine--fructose-6-phosphate aminotransferase [isomerizing] (601 aa).

The active-site Nucleophile; for GATase activity is the C2. The Glutamine amidotransferase type-2 domain occupies 2 to 216 (CGIVGYIGTN…DKEIVIVTKD (215 aa)). SIS domains lie at 282–421 (IIDE…EIGD) and 453–591 (IAGE…VDKP). The For Fru-6P isomerization activity role is filled by K596.

Homodimer.

It is found in the cytoplasm. It catalyses the reaction D-fructose 6-phosphate + L-glutamine = D-glucosamine 6-phosphate + L-glutamate. Catalyzes the first step in hexosamine metabolism, converting fructose-6P into glucosamine-6P using glutamine as a nitrogen source. This is Glutamine--fructose-6-phosphate aminotransferase [isomerizing] from Listeria monocytogenes serovar 1/2a (strain ATCC BAA-679 / EGD-e).